The following is a 539-amino-acid chain: Phosphoenolpyruvate carboxykinase (ATP) (539 aa).

3 residues coordinate substrate: Arg-64, Tyr-206, and Lys-212. ATP contacts are provided by residues Lys-212, His-231, and 247–255 (GLSGTGKTT). Positions 212 and 231 each coordinate Mn(2+). Residue Asp-268 coordinates Mn(2+). ATP contacts are provided by residues Glu-296, Arg-332, 448–449 (RI), and Thr-454. Residue Arg-332 coordinates substrate.

It belongs to the phosphoenolpyruvate carboxykinase (ATP) family. Monomer. It depends on Mn(2+) as a cofactor.

The protein localises to the cytoplasm. The catalysed reaction is oxaloacetate + ATP = phosphoenolpyruvate + ADP + CO2. It participates in carbohydrate biosynthesis; gluconeogenesis. Functionally, involved in the gluconeogenesis. Catalyzes the conversion of oxaloacetate (OAA) to phosphoenolpyruvate (PEP) through direct phosphoryl transfer between the nucleoside triphosphate and OAA. This Cronobacter sakazakii (strain ATCC BAA-894) (Enterobacter sakazakii) protein is Phosphoenolpyruvate carboxykinase (ATP).